Consider the following 368-residue polypeptide: UPF0284 protein PCC8801_3324 (368 aa).

Belongs to the UPF0284 family.

This chain is UPF0284 protein PCC8801_3324, found in Rippkaea orientalis (strain PCC 8801 / RF-1) (Cyanothece sp. (strain PCC 8801)).